Consider the following 602-residue polypeptide: RecBCD enzyme subunit RecD (602 aa).

G174 to T181 is an ATP binding site.

The protein belongs to the RecD family. In terms of assembly, heterotrimer of RecB, RecC and RecD. All subunits contribute to DNA-binding.

It carries out the reaction Couples ATP hydrolysis with the unwinding of duplex DNA at the replication fork by translocating in the 5'-3' direction. This creates two antiparallel DNA single strands (ssDNA). The leading ssDNA polymer is the template for DNA polymerase III holoenzyme which synthesizes a continuous strand.. It catalyses the reaction ATP + H2O = ADP + phosphate + H(+). A helicase/nuclease that prepares dsDNA breaks (DSB) for recombinational DNA repair. Binds to DSBs and unwinds DNA via a highly rapid and processive ATP-dependent bidirectional helicase activity. Unwinds dsDNA until it encounters a Chi (crossover hotspot instigator) sequence from the 3' direction. Cuts ssDNA a few nucleotides 3' to the Chi site. The properties and activities of the enzyme are changed at Chi. The Chi-altered holoenzyme produces a long 3'-ssDNA overhang and facilitates RecA-binding to the ssDNA for homologous DNA recombination and repair. Holoenzyme degrades any linearized DNA that is unable to undergo homologous recombination. In the holoenzyme this subunit has ssDNA-dependent ATPase and 5'-3' helicase activity. When added to pre-assembled RecBC greatly stimulates nuclease activity and augments holoenzyme processivity. Negatively regulates the RecA-loading ability of RecBCD. This is RecBCD enzyme subunit RecD from Buchnera aphidicola subsp. Schizaphis graminum (strain Sg).